Reading from the N-terminus, the 166-residue chain is Cyclin-dependent kinase 4 inhibitor D (166 aa).

N-acetylmethionine is present on Met1. ANK repeat units follow at residues Phe41–Val69, Ser73–Val102, Thr106–Arg135, and Arg138–Leu166.

The protein belongs to the CDKN2 cyclin-dependent kinase inhibitor family. As to quaternary structure, interacts with CDK6.

The protein resides in the nucleus. Its subcellular location is the cytoplasm. In terms of biological role, interacts strongly with CDK4 and CDK6 and inhibits them. This is Cyclin-dependent kinase 4 inhibitor D (CDKN2D) from Homo sapiens (Human).